Here is a 163-residue protein sequence, read N- to C-terminus: DNA polymerase epsilon subunit D (163 aa).

Disordered regions lie at residues 1–22 (MPPK…SAGN) and 126–163 (RKKD…RTDE). Composition is skewed to basic and acidic residues over residues 126-142 (RKKD…DHIS) and 154-163 (EGNKRIRTDE).

As to quaternary structure, heterotetramer. Consists of four subunits: POL2, DPB2, DPB3 and DPB4.

The protein localises to the nucleus. As accessory component of the DNA polymerase epsilon (DNA polymerase II) participates in chromosomal DNA replication. The chain is DNA polymerase epsilon subunit D (DPB4) from Yarrowia lipolytica (strain CLIB 122 / E 150) (Yeast).